The primary structure comprises 288 residues: Homoserine kinase (288 aa).

79-89 (PPARGLGSSSA) contacts ATP.

The protein belongs to the GHMP kinase family. Homoserine kinase subfamily.

It localises to the cytoplasm. It catalyses the reaction L-homoserine + ATP = O-phospho-L-homoserine + ADP + H(+). The protein operates within amino-acid biosynthesis; L-threonine biosynthesis; L-threonine from L-aspartate: step 4/5. Catalyzes the ATP-dependent phosphorylation of L-homoserine to L-homoserine phosphate. This chain is Homoserine kinase, found in Listeria monocytogenes serotype 4b (strain F2365).